The primary structure comprises 902 residues: HTH-type transcriptional regulator MalT (902 aa).

An ATP-binding site is contributed by 39-46 (SPAGYGKT). In terms of domain architecture, HTH luxR-type spans 830–895 (ELIRTSPLTQ…DAVQHAQQLL (66 aa)). The H-T-H motif DNA-binding region spans 854–873 (NEQIAGELAVAATTIKTHIR).

The protein belongs to the MalT family. In terms of assembly, monomer in solution. Oligomerizes to an active state in the presence of the positive effectors ATP and maltotriose.

Its activity is regulated as follows. Activated by ATP and maltotriose, which are both required for DNA binding. Its function is as follows. Positively regulates the transcription of the maltose regulon whose gene products are responsible for uptake and catabolism of malto-oligosaccharides. Specifically binds to the promoter region of its target genes, recognizing a short DNA motif called the MalT box. The chain is HTH-type transcriptional regulator MalT from Salmonella dublin (strain CT_02021853).